Here is an 879-residue protein sequence, read N- to C-terminus: Valine--tRNA ligase (879 aa).

Residues 43–53 (PNVTGVLHMGH) carry the 'HIGH' region motif. Residues 534–538 (KMSKS) carry the 'KMSKS' region motif. Residue K537 participates in ATP binding. The stretch at 807–878 (LGNMIDVEAE…LKESIAALKK (72 aa)) forms a coiled coil.

The protein belongs to the class-I aminoacyl-tRNA synthetase family. ValS type 1 subfamily. In terms of assembly, monomer.

The protein resides in the cytoplasm. The catalysed reaction is tRNA(Val) + L-valine + ATP = L-valyl-tRNA(Val) + AMP + diphosphate. Its function is as follows. Catalyzes the attachment of valine to tRNA(Val). As ValRS can inadvertently accommodate and process structurally similar amino acids such as threonine, to avoid such errors, it has a 'posttransfer' editing activity that hydrolyzes mischarged Thr-tRNA(Val) in a tRNA-dependent manner. This chain is Valine--tRNA ligase, found in Bacteroides thetaiotaomicron (strain ATCC 29148 / DSM 2079 / JCM 5827 / CCUG 10774 / NCTC 10582 / VPI-5482 / E50).